Consider the following 195-residue polypeptide: FMN-dependent NADH:quinone oxidoreductase 2 (195 aa).

FMN contacts are provided by residues 16–18 and 85–88; these read SVS and MWNL.

It belongs to the azoreductase type 1 family. In terms of assembly, homodimer. Requires FMN as cofactor.

The catalysed reaction is 2 a quinone + NADH + H(+) = 2 a 1,4-benzosemiquinone + NAD(+). It carries out the reaction N,N-dimethyl-1,4-phenylenediamine + anthranilate + 2 NAD(+) = 2-(4-dimethylaminophenyl)diazenylbenzoate + 2 NADH + 2 H(+). Functionally, quinone reductase that provides resistance to thiol-specific stress caused by electrophilic quinones. In terms of biological role, also exhibits azoreductase activity. Catalyzes the reductive cleavage of the azo bond in aromatic azo compounds to the corresponding amines. This chain is FMN-dependent NADH:quinone oxidoreductase 2, found in Photobacterium profundum (strain SS9).